The chain runs to 314 residues: tRNA(Ile)-lysidine synthase, chloroplastic (314 aa).

31–36 (SGGQDS) contacts ATP.

The protein belongs to the tRNA(Ile)-lysidine synthase family.

It localises to the plastid. It is found in the chloroplast. The catalysed reaction is cytidine(34) in tRNA(Ile2) + L-lysine + ATP = lysidine(34) in tRNA(Ile2) + AMP + diphosphate + H(+). Its function is as follows. Ligates lysine onto the cytidine present at position 34 of the AUA codon-specific tRNA(Ile) that contains the anticodon CAU, in an ATP-dependent manner. Cytidine is converted to lysidine, thus changing the amino acid specificity of the tRNA from methionine to isoleucine. This Cyanidium caldarium (Red alga) protein is tRNA(Ile)-lysidine synthase, chloroplastic.